A 303-amino-acid chain; its full sequence is Cyclin-dependent kinase 4 (303 aa).

Residue Ala-2 is modified to N-acetylalanine. The 290-residue stretch at 6 to 295 folds into the Protein kinase domain; it reads YEPVAEIGVG…AFRALQHSYL (290 aa). ATP contacts are provided by residues 12–20 and Lys-35; that span reads IGVGAYGTV. The required for binding D-type cyclins stretch occupies residues 50–56; it reads PISTVRE. Asp-140 serves as the catalytic Proton acceptor. Thr-172 bears the Phosphothreonine; by CAK mark.

This sequence belongs to the protein kinase superfamily. CMGC Ser/Thr protein kinase family. CDC2/CDKX subfamily. As to quaternary structure, component of the D-CDK4 complex, composed of CDK4 and some D-type G1 cyclin (CCND1, CCND2 or CCND3). Interacts directly in the complex with CCND1, CCND2 or CCND3. Interacts with SEI1 and ZNF655. Forms a ternary complex, cyclin D-CDK4-CDKN1B, involved in modulating CDK4 enzymatic activity. Interacts directly with CDKN1B (phosphorylated on 'Tyr-88' and 'Tyr-89'); the interaction allows assembly of the cyclin D-CDK4 complex, Thr-172 phosphorylation, nuclear translocation and enhances the cyclin D-CDK4 complex activity. CDK4 activity is either inhibited or enhanced depending on stoichiometry of complex. The non-tyrosine-phosphorylated form of CDKN1B prevents T-loop phosphorylation of CDK4 producing inactive CDK4. Interacts (unphosphorylated form) with CDK2. Also forms ternary complexes with CDKN1A or CDKN2A. Interacts directly with CDKN1A (via its N-terminal); the interaction promotes the assembly of the cyclin D-CDK4 complex, its nuclear translocation and promotes the cyclin D-dependent enzyme activity of CDK4. Interacts with CCND1; the interaction is prevented with the binding of CCND1 to INSM1 during cell cycle progression. Probably forms a complex composed of chaperones HSP90 and HSP70, co-chaperones CDC37, PPP5C, TSC1 and client protein TSC2, CDK4, AKT, RAF1 and NR3C1; this complex does not contain co-chaperones STIP1/HOP and PTGES3/p23. Interacts with CEBPA (when phosphorylated). Interacts with FNIP1 and FNIP2. In terms of processing, phosphorylation at Thr-172 is required for enzymatic activity. Phosphorylated, in vitro, at this site by CCNH-CDK7, but, in vivo, appears to be phosphorylated by a proline-directed kinase. In the cyclin D-CDK4-CDKN1B complex, this phosphorylation and consequent CDK4 enzyme activity, is dependent on the tyrosine phosphorylation state of CDKN1B. Thus, in proliferating cells, CDK4 within the complex is phosphorylated on Thr-172 in the T-loop. In resting cells, phosphorylation on Thr-172 is prevented by the non-tyrosine-phosphorylated form of CDKN1B.

It localises to the cytoplasm. The protein resides in the nucleus. The protein localises to the nucleus membrane. The catalysed reaction is L-seryl-[protein] + ATP = O-phospho-L-seryl-[protein] + ADP + H(+). It carries out the reaction L-threonyl-[protein] + ATP = O-phospho-L-threonyl-[protein] + ADP + H(+). Its activity is regulated as follows. Both phosphorylation at Thr-172 and binding of a D-type cyclin are necessary for enzymatic activity. Full activation of the cyclin-D-CDK4 complex appears to require other factors such as recruitment of the substrate via a substrate recruitment motif, and/or formation of the CDKN1B ternary complex. Inhibited by INK4 family members. In resting cells, the non-tyrosine-phosphorylated form of CDKN1B prevents phosphorylation at Thr-172 and inactivation, while, in proliferating cells, tyrosine phosphorylation of CDKN1B allows phosphorylation of Thr-172 of CDK4 and subsequent activation. Functionally, ser/Thr-kinase component of cyclin D-CDK4 (DC) complexes that phosphorylate and inhibit members of the retinoblastoma (RB) protein family including RB1 and regulate the cell-cycle during G(1)/S transition. Phosphorylation of RB1 allows dissociation of the transcription factor E2F from the RB/E2F complexes and the subsequent transcription of E2F target genes which are responsible for the progression through the G(1) phase. Hypophosphorylates RB1 in early G(1) phase. Cyclin D-CDK4 complexes are major integrators of various mitogenenic and antimitogenic signals. Also phosphorylates SMAD3 in a cell-cycle-dependent manner and represses its transcriptional activity. Component of the ternary complex, cyclin D/CDK4/CDKN1B, required for nuclear translocation and activity of the cyclin D-CDK4 complex. This chain is Cyclin-dependent kinase 4 (CDK4), found in Sus scrofa (Pig).